Here is a 200-residue protein sequence, read N- to C-terminus: NAD(P)H dehydrogenase (quinone) (200 aa).

A Flavodoxin-like domain is found at 4–191 (LLVLYYSMYG…TIARFQGEHV (188 aa)). Residues 10–15 (SMYGHV) and 79–81 (TRF) contribute to the FMN site. Tyr12 provides a ligand contact to NAD(+). Residue Trp99 coordinates substrate. FMN-binding positions include 114–120 (STASQHG) and His135.

It belongs to the WrbA family. The cofactor is FMN.

It carries out the reaction a quinone + NADH + H(+) = a quinol + NAD(+). It catalyses the reaction a quinone + NADPH + H(+) = a quinol + NADP(+). The polypeptide is NAD(P)H dehydrogenase (quinone) (Nitrosococcus oceani (strain ATCC 19707 / BCRC 17464 / JCM 30415 / NCIMB 11848 / C-107)).